The sequence spans 214 residues: Melanoregulin (214 aa).

Residues 162–172 (LSERYLLVVDR) carry the Cholesterol-binding sequence motif motif. Residue serine 213 is modified to Phosphoserine.

Belongs to the melanoregulin family. As to quaternary structure, identified in a complex with RILP and DCTN1; interacts directly with RILP, but does not interact directly with DCTN1. Interacts with PRPH2. Palmitoylated. Palmitoylation is required to maintain the protein at the melanosome membrane. Detected in melanocytes. Expressed in retina, in retinal pigment epithelium (at protein level). Widely expressed with higher expression in skin, heart, liver, testis and thymus. Detected in retina, in retinal pigment epithelium cells.

Its subcellular location is the apical cell membrane. It localises to the melanosome membrane. The protein localises to the lysosome membrane. The protein resides in the cytoplasmic vesicle membrane. Probably functions as a cargo-recognition protein that couples cytoplasmic vesicles to the transport machinery. Plays a role in hair pigmentation, a process that involves shedding of melanosome-containing vesicles from melanocytes, followed by phagocytosis of the melanosome-containing vesicles by keratinocytes. Functions on melanosomes as receptor for RILP and the complex formed by RILP and DCTN1, and thereby contributes to retrograde melanosome transport from the cell periphery to the center. Overexpression causes accumulation of late endosomes and/or lysosomes at the microtubule organising center (MTOC) at the center of the cell. Probably binds cholesterol and requires the presence of cholesterol in membranes to function in microtubule-mediated retrograde organelle transport. Binds phosphatidylinositol 3-phosphate, phosphatidylinositol 4-phosphate, phosphatidylinositol 5-phosphate and phosphatidylinositol 3,5-bisphosphate, but not phosphatidylinositol 3,4-bisphosphate or phosphatidylinositol 4,5-bisphosphate. Required for normal phagosome clearing and normal activation of lysosomal enzymes in lysosomes from retinal pigment epithelium cells. Required for normal degradation of the lipofuscin component N-retinylidene-N-retinylethanolamine (A2E) in the eye. May function in membrane fusion and regulate the biogenesis of disk membranes of photoreceptor rod cells. This Mus musculus (Mouse) protein is Melanoregulin (Mreg).